The primary structure comprises 476 residues: Siroheme synthase (476 aa).

The tract at residues Met1–Leu203 is precorrin-2 dehydrogenase /sirohydrochlorin ferrochelatase. Residues Gly22 to Val23 and Gln43 to Lys44 each bind NAD(+). At Ser128 the chain carries Phosphoserine. Residues Gly214–Ala476 form a uroporphyrinogen-III C-methyltransferase region. Residue Pro223 participates in S-adenosyl-L-methionine binding. Catalysis depends on Asp246, which acts as the Proton acceptor. Lys268 (proton donor) is an active-site residue. S-adenosyl-L-methionine-binding positions include Gly299 to Asp301, Val304, Thr329 to Ala330, Met381, and Gly410.

This sequence in the N-terminal section; belongs to the precorrin-2 dehydrogenase / sirohydrochlorin ferrochelatase family. In the C-terminal section; belongs to the precorrin methyltransferase family.

The catalysed reaction is uroporphyrinogen III + 2 S-adenosyl-L-methionine = precorrin-2 + 2 S-adenosyl-L-homocysteine + H(+). The enzyme catalyses precorrin-2 + NAD(+) = sirohydrochlorin + NADH + 2 H(+). It carries out the reaction siroheme + 2 H(+) = sirohydrochlorin + Fe(2+). The protein operates within cofactor biosynthesis; adenosylcobalamin biosynthesis; precorrin-2 from uroporphyrinogen III: step 1/1. Its pathway is cofactor biosynthesis; adenosylcobalamin biosynthesis; sirohydrochlorin from precorrin-2: step 1/1. It participates in porphyrin-containing compound metabolism; siroheme biosynthesis; precorrin-2 from uroporphyrinogen III: step 1/1. It functions in the pathway porphyrin-containing compound metabolism; siroheme biosynthesis; siroheme from sirohydrochlorin: step 1/1. The protein operates within porphyrin-containing compound metabolism; siroheme biosynthesis; sirohydrochlorin from precorrin-2: step 1/1. Multifunctional enzyme that catalyzes the SAM-dependent methylations of uroporphyrinogen III at position C-2 and C-7 to form precorrin-2 via precorrin-1. Then it catalyzes the NAD-dependent ring dehydrogenation of precorrin-2 to yield sirohydrochlorin. Finally, it catalyzes the ferrochelation of sirohydrochlorin to yield siroheme. The polypeptide is Siroheme synthase (Actinobacillus succinogenes (strain ATCC 55618 / DSM 22257 / CCUG 43843 / 130Z)).